A 320-amino-acid chain; its full sequence is Cytochrome c biogenesis protein CcsA (320 aa).

Helical transmembrane passes span Val14–Trp34, Gly68–Leu88, Leu101–Leu121, Val146–Met166, Thr226–Asn246, Thr260–Leu277, and Val289–Ile309.

Belongs to the CcmF/CycK/Ccl1/NrfE/CcsA family. As to quaternary structure, may interact with ccs1.

Its subcellular location is the cellular thylakoid membrane. Functionally, required during biogenesis of c-type cytochromes (cytochrome c6 and cytochrome f) at the step of heme attachment. In Synechococcus sp. (strain WH7803), this protein is Cytochrome c biogenesis protein CcsA.